A 705-amino-acid polypeptide reads, in one-letter code: MTRRTPIELYRNIGISAHIDAGKTTTTERILFYTGITHKLGEVHEGAAVMDWMEQEQERGITITSAATTAFWRGMAGNYPEHRINIIDTPGHVDFTIEVERSMRVLDGACMVYDSVGGVQPQSETVWRQANKYRVPRIAFVNKMDRIGADFLRVQRQIVERLKGDAVPVQLPIGAEDNFQGVVDLVKMKAILWDEASQGVSFKYEDVPAPMLELANQWRDKLVEKAAEANEVLLEKYLSGEALSEEEIKTGLRQRTIANEIVPMLCGSAFKNKGVQAMLDAVLDYLPSPLDVPAIKGHDEHDKEIERRPSDKDPFSALAFKIMTDPFVGQLVFFRAYSGVVKSGDSVLNPLKNKKERLGRILQMHANERKEINEVYAGDIAAAVGLKDVTTGDTLTDPGHVIILERMIFPEPVISQAVEPKTKADQEKMSLALNRLAQEDPSFRVRTDEESGQTIISGMGELHLEILVDRMKREFNVEATVGKPQVAYRETIRKKVEGVEGKFVKQSGGRGQYGHAVITVEPQAAGKGFEFIDAIKGGVIPREFIPAVERGIVDTLNTGVLAGYPVVDVKVTLTFGSYHDVDSNENAFRMAGSMAFKEGLRRATPVLLEPMMQVEVETPEDFTGNVMGDLSSRRGMVQGMEDIAGGGGKLVRAEVPLAEMFGYSTSLRSLTQGRATYSMEFKHYAEAPRQVAEQVIAARTGSTRA.

The tr-type G domain maps to 8–290 (ELYRNIGISA…AVLDYLPSPL (283 aa)). GTP-binding positions include 17–24 (AHIDAGKT), 88–92 (DTPGH), and 142–145 (NKMD).

The protein belongs to the TRAFAC class translation factor GTPase superfamily. Classic translation factor GTPase family. EF-G/EF-2 subfamily.

The protein localises to the cytoplasm. In terms of biological role, catalyzes the GTP-dependent ribosomal translocation step during translation elongation. During this step, the ribosome changes from the pre-translocational (PRE) to the post-translocational (POST) state as the newly formed A-site-bound peptidyl-tRNA and P-site-bound deacylated tRNA move to the P and E sites, respectively. Catalyzes the coordinated movement of the two tRNA molecules, the mRNA and conformational changes in the ribosome. This Bordetella avium (strain 197N) protein is Elongation factor G 2.